The sequence spans 85 residues: Small ribosomal subunit protein uS17 (85 aa).

Belongs to the universal ribosomal protein uS17 family. In terms of assembly, part of the 30S ribosomal subunit.

Functionally, one of the primary rRNA binding proteins, it binds specifically to the 5'-end of 16S ribosomal RNA. This Natranaerobius thermophilus (strain ATCC BAA-1301 / DSM 18059 / JW/NM-WN-LF) protein is Small ribosomal subunit protein uS17.